A 325-amino-acid chain; its full sequence is Tetraacyldisaccharide 4'-kinase (325 aa).

Thr-55–Thr-62 contacts ATP.

The protein belongs to the LpxK family.

It carries out the reaction a lipid A disaccharide + ATP = a lipid IVA + ADP + H(+). It participates in glycolipid biosynthesis; lipid IV(A) biosynthesis; lipid IV(A) from (3R)-3-hydroxytetradecanoyl-[acyl-carrier-protein] and UDP-N-acetyl-alpha-D-glucosamine: step 6/6. Functionally, transfers the gamma-phosphate of ATP to the 4'-position of a tetraacyldisaccharide 1-phosphate intermediate (termed DS-1-P) to form tetraacyldisaccharide 1,4'-bis-phosphate (lipid IVA). The chain is Tetraacyldisaccharide 4'-kinase from Salmonella paratyphi A (strain ATCC 9150 / SARB42).